Here is a 266-residue protein sequence, read N- to C-terminus: Short-chain dehydrogenase/reductase tropE (266 aa).

NADP(+)-binding residues include leucine 18, aspartate 69, and asparagine 96. The Proton donor role is filled by serine 147. 3 residues coordinate NADP(+): tyrosine 181, lysine 185, and threonine 216. Tyrosine 181 (proton acceptor) is an active-site residue. Lysine 185 acts as the Lowers pKa of active site Tyr in catalysis.

The protein belongs to the short-chain dehydrogenases/reductases (SDR) family.

The protein operates within secondary metabolite biosynthesis. Short-chain dehydrogenase/reductase; part of the gene cluster that mediates the biosynthesis of the tropolone class of fungal maleic anhydrides. The pathway begins with the synthesis of 3-methylorcinaldehyde by the non-reducing polyketide synthase (PKS) tropA. 3-methylorcinaldehyde is the substrate for the FAD-dependent monooxygenase tropB to yield a dearomatized hydroxycyclohexadione. The 2-oxoglutarate-dependent dioxygenase tropC then performs the oxidative ring expansion to provide the first tropolone metabolite stipitaldehyde. Trop D converts stipitaldehyde into stipitacetal which is in turn converted to stipitalide by the short-chain dehydrogenase/reductase tropE. The next steps involve tropF, tropG, tropH, tropI and tropJ to form successive tropolone maleic anhydrides including stipitaldehydic, stipitatonic and stipitatic acids. The sequence is that of Short-chain dehydrogenase/reductase tropE from Talaromyces stipitatus (strain ATCC 10500 / CBS 375.48 / QM 6759 / NRRL 1006) (Penicillium stipitatum).